Here is an 890-residue protein sequence, read N- to C-terminus: Alanine--tRNA ligase (890 aa).

Residues His573, His577, Cys675, and His679 each coordinate Zn(2+).

The protein belongs to the class-II aminoacyl-tRNA synthetase family. It depends on Zn(2+) as a cofactor.

The protein localises to the cytoplasm. It carries out the reaction tRNA(Ala) + L-alanine + ATP = L-alanyl-tRNA(Ala) + AMP + diphosphate. Its function is as follows. Catalyzes the attachment of alanine to tRNA(Ala) in a two-step reaction: alanine is first activated by ATP to form Ala-AMP and then transferred to the acceptor end of tRNA(Ala). Also edits incorrectly charged Ser-tRNA(Ala) and Gly-tRNA(Ala) via its editing domain. This is Alanine--tRNA ligase from Streptomyces avermitilis (strain ATCC 31267 / DSM 46492 / JCM 5070 / NBRC 14893 / NCIMB 12804 / NRRL 8165 / MA-4680).